The following is a 589-amino-acid chain: Monocopper oxidase-like protein SKS1 (589 aa).

The N-terminal stretch at 1–24 is a signal peptide; it reads MAATCSLLASFLLCFALLSAVSFA. N-linked (GlcNAc...) asparagine glycans are attached at residues N62, N111, N204, N243, N260, N296, N345, N365, N433, and N447. The disordered stretch occupies residues 322-356; that stretch reads LPVPKTDVSSPWSAMSQPKTIRQNTSASGARPNPQ. Residues 328 to 349 are compositionally biased toward polar residues; that stretch reads DVSSPWSAMSQPKTIRQNTSAS. H455 provides a ligand contact to Cu cation. Residue S563 is the site of GPI-anchor amidated serine attachment. A propeptide spans 564–589 (removed in mature form); that stretch reads AATSILNGHLKLMLLMVLLASVFRFC.

This sequence belongs to the multicopper oxidase family. Cu cation serves as cofactor.

It localises to the cell membrane. The sequence is that of Monocopper oxidase-like protein SKS1 (SKS1) from Arabidopsis thaliana (Mouse-ear cress).